The primary structure comprises 239 residues: 4-hydroxy-tetrahydrodipicolinate reductase (239 aa).

Residues 8–13 (GSTGKM), 78–80 (GTT), and 102–105 (SANM) each bind NAD(+). The active-site Proton donor/acceptor is His-134. His-135 is a binding site for (S)-2,3,4,5-tetrahydrodipicolinate. The Proton donor role is filled by Lys-138. 144-145 (GT) contributes to the (S)-2,3,4,5-tetrahydrodipicolinate binding site.

Belongs to the DapB family.

The protein localises to the cytoplasm. The enzyme catalyses (S)-2,3,4,5-tetrahydrodipicolinate + NAD(+) + H2O = (2S,4S)-4-hydroxy-2,3,4,5-tetrahydrodipicolinate + NADH + H(+). The catalysed reaction is (S)-2,3,4,5-tetrahydrodipicolinate + NADP(+) + H2O = (2S,4S)-4-hydroxy-2,3,4,5-tetrahydrodipicolinate + NADPH + H(+). It participates in amino-acid biosynthesis; L-lysine biosynthesis via DAP pathway; (S)-tetrahydrodipicolinate from L-aspartate: step 4/4. In terms of biological role, catalyzes the conversion of 4-hydroxy-tetrahydrodipicolinate (HTPA) to tetrahydrodipicolinate. The chain is 4-hydroxy-tetrahydrodipicolinate reductase from Rickettsia peacockii (strain Rustic).